A 431-amino-acid chain; its full sequence is Xaa-Arg dipeptidase (431 aa).

This sequence belongs to the peptidase M20A family.

It catalyses the reaction beta-alanyl-L-lysine + H2O = beta-alanine + L-lysine. It carries out the reaction beta-alanyl-L-arginine + H2O = beta-alanine + L-arginine. The catalysed reaction is beta-alanyl-L-ornithine + H2O = beta-alanine + L-ornithine. The enzyme catalyses N(2)-(4-aminobutanoyl)-L-lysine + H2O = 4-aminobutanoate + L-lysine. It catalyses the reaction N(2)-(4-aminobutanoyl)-L-arginine + H2O = 4-aminobutanoate + L-arginine. It carries out the reaction N(2)-(4-aminobutanoyl)-L-ornithine + H2O = 4-aminobutanoate + L-ornithine. In terms of biological role, catalyzes the peptide bond hydrolysis in dipeptides having basic amino acids lysine, ornithine or arginine at C-terminus. Postulated to function in a metabolite repair mechanism by eliminating alternate dipeptide by-products formed during carnosine synthesis. The protein is Xaa-Arg dipeptidase of Mus musculus (Mouse).